The chain runs to 562 residues: Formate--tetrahydrofolate ligase (562 aa).

Thr71–Ser78 provides a ligand contact to ATP.

It belongs to the formate--tetrahydrofolate ligase family.

The catalysed reaction is (6S)-5,6,7,8-tetrahydrofolate + formate + ATP = (6R)-10-formyltetrahydrofolate + ADP + phosphate. It functions in the pathway one-carbon metabolism; tetrahydrofolate interconversion. This is Formate--tetrahydrofolate ligase from Bacillus anthracis (strain A0248).